A 501-amino-acid polypeptide reads, in one-letter code: MNRFIDRVVLHLAAGDGGNGCVSVHREKFKPLGGPDGGNGGHGGDIILEVTAQVHTLLDFHFHPHVKAERGANGAGDHRNGARGKDLVLEVPPGTVVLNEKGETLADLTSVGMKFIAAAGGNGGLGNAALASKARKAPGFALIGEPGEAHDLILELKSMADVGLVGFPSAGKSSLISVMSAAKPKIGDYPFTTLQPNLGVVNVGHETFTMADVPGLIPGASEGKGLGLDFLRHIERTSVLVHVVDTATMDPGRDPISDIEALEAELAAYQSALDEDTGLGDLSQRPRIVVLNKADVPEAEELAEFLKEDIEKQFGWPVFIISAVARKGLDPLKYKLLEIVQDARKKRPKEKAESVIIKPKAVDHRTKGQFQIKPDPEVQGGFIITGEKPERWILQTDFENDEAVGYLADRLAKLGIEDGLRKAGAHVGANVTIGGISFEWEPMTTAGDDPILTGRGTDVRLEQTSRISAAERKRASQVRRGLIDELDYGEDQEASRERWEG.

Residues 2–159 (NRFIDRVVLH…HDLILELKSM (158 aa)) enclose the Obg domain. An OBG-type G domain is found at 160-341 (ADVGLVGFPS…LKYKLLEIVQ (182 aa)). GTP is bound by residues 166–173 (GFPSAGKS), 191–195 (FTTLQ), 212–215 (DVPG), 292–295 (NKAD), and 322–324 (SAV). Residues serine 173 and threonine 193 each contribute to the Mg(2+) site. The OCT domain occupies 362–442 (VDHRTKGQFQ…IGGISFEWEP (81 aa)).

Belongs to the TRAFAC class OBG-HflX-like GTPase superfamily. OBG GTPase family. Monomer. Requires Mg(2+) as cofactor.

It localises to the cytoplasm. In terms of biological role, an essential GTPase which binds GTP, GDP and possibly (p)ppGpp with moderate affinity, with high nucleotide exchange rates and a fairly low GTP hydrolysis rate. Plays a role in control of the cell cycle, stress response, ribosome biogenesis and in those bacteria that undergo differentiation, in morphogenesis control. This is GTPase Obg from Corynebacterium glutamicum (strain R).